Consider the following 305-residue polypeptide: Transmembrane protein 74 (305 aa).

Disordered regions lie at residues 52–88 (ATEM…LLHS) and 123–143 (RNRS…GWEN). Residues 58–78 (SKLSSSPASPSSSLQNSTLQP) show a composition bias toward low complexity. 2 helical membrane passes run 178–198 (FISA…SYIV) and 232–252 (VIAG…LLMM).

The protein belongs to the TMEM74 family. As to expression, expressed in heart, lung, and placenta.

Its subcellular location is the lysosome membrane. It localises to the cytoplasmic vesicle. The protein resides in the autophagosome membrane. Plays an essential role in autophagy. TMEM74-induced autophagy may involve PI3K signal transduction. This is Transmembrane protein 74 (TMEM74) from Homo sapiens (Human).